We begin with the raw amino-acid sequence, 528 residues long: Na(+)/H(+) antiporter NhaB (528 aa).

The next 11 helical transmembrane spans lie at 23–45 (FAIL…VAGW), 66–86 (PGGL…SQVL), 95–115 (VLLL…LLLF), 139–159 (AFLS…AVAV), 203–223 (LLMH…VGEP), 241–261 (LRMS…CFLV), 310–330 (LIIG…SVII), 349–369 (EEAL…GVII), 390–410 (LVIF…VFVG), 448–468 (ATPN…APLI), and 476–496 (VWMA…AIQF).

The protein belongs to the NhaB Na(+)/H(+) (TC 2.A.34) antiporter family.

The protein localises to the cell inner membrane. It carries out the reaction 2 Na(+)(in) + 3 H(+)(out) = 2 Na(+)(out) + 3 H(+)(in). Its function is as follows. Na(+)/H(+) antiporter that extrudes sodium in exchange for external protons. The polypeptide is Na(+)/H(+) antiporter NhaB (Shewanella piezotolerans (strain WP3 / JCM 13877)).